The sequence spans 279 residues: Inorganic pyrophosphatase (279 aa).

R100 contributes to the diphosphate binding site. Mg(2+) contacts are provided by D132, D137, and D169.

The protein belongs to the PPase family. Mg(2+) serves as cofactor.

It carries out the reaction diphosphate + H2O = 2 phosphate + H(+). This chain is Inorganic pyrophosphatase (ppa1), found in Dictyostelium discoideum (Social amoeba).